The primary structure comprises 254 residues: Methyl-CpG-binding domain-containing protein 11 (254 aa).

Residues 4-74 enclose the MBD domain; that stretch reads EEEVVSVELP…AEFDWTTSGT (71 aa). The interval 56–254 is disordered; that stretch reads KSHPGNPAIA…EKTAEGEATG (199 aa). Basic and acidic residues-rich tracts occupy residues 80 to 97, 107 to 130, 151 to 162, and 178 to 254; these read RISE…EPPK, SKKD…KDTE, ETERVNDAKENI, and ESMK…EATG. At Ser-116 the chain carries Phosphoserine.

As to expression, expressed in leaves (around hydathodes), buds, flowers (carpels and pollen grains), stems (around nodes), siliques, mature seeds and roots.

The protein localises to the nucleus. In terms of biological role, transcriptional regulator that binds DNA independently of its methylation status. Required during plant organogenesis and development. The protein is Methyl-CpG-binding domain-containing protein 11 (MBD11) of Arabidopsis thaliana (Mouse-ear cress).